The primary structure comprises 645 residues: MEQINIQFPDGNKKAFDKGTTTEDIAQSISPGLRKKAVAGKFNGQLVDLTKPLETDGSIEIVTPGSEEALEVLRHSTAHLMAHAIKRLYGNVKFGVGPVIEGGFYYDFDIDQNISSDDFEQIEKTMKQIVNENMKIERKVVSRDEAKELFSNDEYKLELIDAIPEDENVTLYSQGDFTDLCRGVHVPSTAKIKEFKLLSTAGAYWRGDSNNKMLQRIYGTAFFDKKELKAHLQMLEERKERDHRKIGKELELFTNSQLVGAGLPLWLPNGATIRREIERYIVDKEVSMGYDHVYTPVLANVDLYKTSGHWDHYQEDMFPPMQLDETESMVLRPMNCPHHMMIYANKPHSYRELPIRIAELGTMHRYEASGAVSGLQRVRGMTLNDSHIFVRPDQIKEEFKRVVNMIIDVYKDFGFEDYSFRLSYRDPEDKEKYFDDDDMWNKAENMLKEAADELGLSYEEAIGEAAFYGPKLDVQVKTAMGKEETLSTAQLDFLLPERFDLTYIGQDGEHHRPVVIHRGVVSTMERFVAFLTEETKGAFPTWLAPKQVQIIPVNVDLHYDYARQLQDELKSQGVRVSIDDRNEKMGYKIREAQMQKIPYQIVVGDKEVENNQVNVRQYGSQDQETVEKDEFIWNLVDEIRLKKHR.

In terms of domain architecture, TGS spans 1 to 63 (MEQINIQFPD…ETDGSIEIVT (63 aa)). Residues 242 to 540 (DHRKIGKELE…LTEETKGAFP (299 aa)) are catalytic. Positions 336, 387, and 517 each coordinate Zn(2+).

The protein belongs to the class-II aminoacyl-tRNA synthetase family. As to quaternary structure, homodimer. Requires Zn(2+) as cofactor.

It is found in the cytoplasm. The enzyme catalyses tRNA(Thr) + L-threonine + ATP = L-threonyl-tRNA(Thr) + AMP + diphosphate + H(+). Its function is as follows. Catalyzes the attachment of threonine to tRNA(Thr) in a two-step reaction: L-threonine is first activated by ATP to form Thr-AMP and then transferred to the acceptor end of tRNA(Thr). Also edits incorrectly charged L-seryl-tRNA(Thr). The protein is Threonine--tRNA ligase of Staphylococcus aureus (strain JH1).